Consider the following 350-residue polypeptide: Cyclin-O (350 aa).

A disordered region spans residues 1–89 (MVTPCPTSPS…GSPLPGPAQP (89 aa)). The segment covering 28–42 (PVKKSRRPRLRRKQP) has biased composition (basic residues). Ser81 is subject to Phosphoserine.

This sequence belongs to the cyclin family. In terms of tissue distribution, present in respiratory cells (at protein level).

It is found in the cytoplasm. The protein resides in the nucleus. Its subcellular location is the nucleolus. Specifically required for generation of multiciliated cells, possibly by promoting a cell cycle state compatible with centriole amplification and maturation. Acts downstream of MCIDAS to promote mother centriole amplification and maturation in preparation for apical docking. This is Cyclin-O from Homo sapiens (Human).